The sequence spans 136 residues: Large ribosomal subunit protein uL16c (136 aa).

The disordered stretch occupies residues 1-20; the sequence is MLSPKRTKFRKQHRGRMKGK.

The protein belongs to the universal ribosomal protein uL16 family. In terms of assembly, part of the 50S ribosomal subunit.

The protein localises to the plastid. It localises to the chloroplast. The chain is Large ribosomal subunit protein uL16c from Brachypodium distachyon (Purple false brome).